We begin with the raw amino-acid sequence, 362 residues long: uncharacterized protein (362 aa).

The protein belongs to the carbohydrate kinase PfkB family.

This is an uncharacterized protein from Escherichia coli (strain K12).